Here is a 315-residue protein sequence, read N- to C-terminus: Protein FRA10AC1 homolog (315 aa).

Position 1 is an N-acetylmethionine (Met1). The interval 1–28 is disordered; that stretch reads MHGHGGYDSDFSDDEQGGGSSKKRKKTV. Residues Ser9 and Ser12 each carry the phosphoserine modification. Lys36 is subject to N6-acetyllysine. Basic residues predominate over residues 225–235; sequence KEIKSTKKKSK. Residues 225–308 form a disordered region; sequence KEIKSTKKKS…EKSQEEEFDD (84 aa). Composition is skewed to basic and acidic residues over residues 236-245 and 255-278; these read TTPECDESPR and EASKGKDEGHSSSKKSEDSRNRNA. Ser283 and Ser285 each carry phosphoserine.

In terms of assembly, interacts with ESS2.

It localises to the nucleus. Its function is as follows. May be involved in pre-mRNA splicing. This Mus musculus (Mouse) protein is Protein FRA10AC1 homolog (Fra10ac1).